Consider the following 216-residue polypeptide: Uracil phosphoribosyltransferase (216 aa).

GTP is bound by residues R30, R39, 73–76 (ASKI), and K75. R83 lines the 5-phospho-alpha-D-ribose 1-diphosphate pocket. K100 serves as a coordination point for GTP. R108 is a 5-phospho-alpha-D-ribose 1-diphosphate binding site. Residue R129 coordinates GTP. 5-phospho-alpha-D-ribose 1-diphosphate-binding positions include D135 and 135–143 (DPMLATGGT). Residue Y199 participates in D-ribose 5-phosphate binding. Uracil contacts are provided by residues I200 and 205 to 207 (GDF). D206 contacts 5-phospho-alpha-D-ribose 1-diphosphate.

This sequence belongs to the UPRTase family. Mg(2+) serves as cofactor.

The enzyme catalyses UMP + diphosphate = 5-phospho-alpha-D-ribose 1-diphosphate + uracil. It participates in pyrimidine metabolism; UMP biosynthesis via salvage pathway; UMP from uracil: step 1/1. With respect to regulation, allosterically activated by GTP. In terms of biological role, catalyzes the conversion of uracil and 5-phospho-alpha-D-ribose 1-diphosphate (PRPP) to UMP and diphosphate. This chain is Uracil phosphoribosyltransferase (uprt), found in Dictyostelium discoideum (Social amoeba).